A 339-amino-acid chain; its full sequence is Bifunctional NMN adenylyltransferase/Nudix hydrolase (339 aa).

The segment at 1 to 183 (MQTKYQYGIY…RYIALCDEYQ (183 aa)) is NMN adenylyltransferase. The region spanning 199-335 (PTFITTDAVV…EDHFQIIQHF (137 aa)) is the Nudix hydrolase domain. A Nudix box motif is present at residues 233-254 (GFIKQNETLVEGMLRELKEETR).

It in the N-terminal section; belongs to the archaeal NMN adenylyltransferase family. It depends on Mg(2+) as a cofactor. The cofactor is Mn(2+).

Its subcellular location is the cytoplasm. It carries out the reaction beta-nicotinamide D-ribonucleotide + ATP + H(+) = diphosphate + NAD(+). The protein operates within cofactor biosynthesis; NAD(+) biosynthesis; NAD(+) from nicotinamide D-ribonucleotide: step 1/1. Functionally, the Nudix hydrolase domain is active on ADP-ribose, (2')-phospho-ADP-ribose, IDP-ribose and NADPH. This chain is Bifunctional NMN adenylyltransferase/Nudix hydrolase, found in Synechocystis sp. (strain ATCC 27184 / PCC 6803 / Kazusa).